The sequence spans 100 residues: Integration host factor subunit beta (100 aa).

Residues 53 to 100 are disordered; that stretch reads LHHRPPRIGRNPKTGEPVALPGKYVPHFKPGKELRDRVNAGRHNPIQS. Positions 82–91 are enriched in basic and acidic residues; it reads PGKELRDRVN.

Belongs to the bacterial histone-like protein family. Heterodimer of an alpha and a beta chain.

This protein is one of the two subunits of integration host factor, a specific DNA-binding protein that functions in genetic recombination as well as in transcriptional and translational control. In Alkalilimnicola ehrlichii (strain ATCC BAA-1101 / DSM 17681 / MLHE-1), this protein is Integration host factor subunit beta.